A 216-amino-acid polypeptide reads, in one-letter code: Kynurenine formamidase (216 aa).

Tryptophan 25 is a substrate binding site. Positions 55, 59, and 61 each coordinate Zn(2+). The active-site Proton donor/acceptor is the histidine 65. Residues histidine 167 and glutamate 179 each coordinate Zn(2+).

This sequence belongs to the Cyclase 1 superfamily. KynB family. In terms of assembly, homodimer. Zn(2+) serves as cofactor.

It carries out the reaction N-formyl-L-kynurenine + H2O = L-kynurenine + formate + H(+). It functions in the pathway amino-acid degradation; L-tryptophan degradation via kynurenine pathway; L-kynurenine from L-tryptophan: step 2/2. In terms of biological role, catalyzes the hydrolysis of N-formyl-L-kynurenine to L-kynurenine, the second step in the kynurenine pathway of tryptophan degradation. The chain is Kynurenine formamidase from Cupriavidus necator (strain ATCC 17699 / DSM 428 / KCTC 22496 / NCIMB 10442 / H16 / Stanier 337) (Ralstonia eutropha).